The sequence spans 401 residues: L-rhamnonate dehydratase (401 aa).

Substrate contacts are provided by histidine 29 and arginine 55. 3 residues coordinate Mg(2+): aspartate 222, glutamate 248, and glutamate 276. Histidine 325 acts as the Proton acceptor in catalysis. Glutamate 345 contributes to the substrate binding site.

This sequence belongs to the mandelate racemase/muconate lactonizing enzyme family. RhamD subfamily. Homooctamer; tetramer of dimers. Requires Mg(2+) as cofactor.

The enzyme catalyses L-rhamnonate = 2-dehydro-3-deoxy-L-rhamnonate + H2O. In terms of biological role, catalyzes the dehydration of L-rhamnonate to 2-keto-3-deoxy-L-rhamnonate (KDR). Can also dehydrate L-lyxonate, L-mannonate and D-gulonate, although less efficiently, but not 2-keto-4-hydroxyheptane-1,7-dioate. The chain is L-rhamnonate dehydratase (rhmD) from Escherichia coli (strain K12).